The following is a 454-amino-acid chain: Putative serine carboxypeptidase-like 23 (454 aa).

Positions 1–22 (MARIHLIIILLVISSTSSSSSS) are cleaved as a signal peptide. Asparagine 52, asparagine 102, and asparagine 136 each carry an N-linked (GlcNAc...) asparagine glycan. Cystine bridges form between cysteine 85–cysteine 338, cysteine 247–cysteine 258, and cysteine 282–cysteine 306. Residue serine 178 is part of the active site. Asparagine 287 and asparagine 327 each carry an N-linked (GlcNAc...) asparagine glycan. Residues aspartate 375 and histidine 427 contribute to the active site.

The protein belongs to the peptidase S10 family. In terms of tissue distribution, expression not detected.

The protein localises to the secreted. Functionally, probable carboxypeptidase. The chain is Putative serine carboxypeptidase-like 23 (SCPL23) from Arabidopsis thaliana (Mouse-ear cress).